The primary structure comprises 612 residues: uncharacterized protein (612 aa).

It localises to the plastid. The protein localises to the chloroplast. This is an uncharacterized protein from Pyropia yezoensis (Susabi-nori).